The chain runs to 382 residues: Probable trehalose-phosphate phosphatase 2 (382 aa).

The protein belongs to the trehalose phosphatase family. A divalent metal cation is required as a cofactor. As to expression, expressed in roots and shoots.

The enzyme catalyses alpha,alpha-trehalose 6-phosphate + H2O = alpha,alpha-trehalose + phosphate. It functions in the pathway glycan biosynthesis; trehalose biosynthesis. In terms of biological role, removes the phosphate from trehalose 6-phosphate to produce free trehalose. Trehalose accumulation in plant may improve abiotic stress tolerance. The polypeptide is Probable trehalose-phosphate phosphatase 2 (TPP2) (Oryza sativa subsp. japonica (Rice)).